Here is a 377-residue protein sequence, read N- to C-terminus: Putrescine transport ATP-binding protein PotG (377 aa).

The 231-residue stretch at Leu-20–Ile-250 folds into the ABC transporter domain. Position 52–59 (Gly-52–Ser-59) interacts with ATP.

The protein belongs to the ABC transporter superfamily. In terms of assembly, the complex is composed of two ATP-binding proteins (PotG), two transmembrane proteins (PotH and PotI) and a solute-binding protein (PotF).

The protein resides in the cell inner membrane. It catalyses the reaction putrescine(out) + ATP + H2O = putrescine(in) + ADP + phosphate + H(+). With respect to regulation, transport is feedback inhibited by intracellular polyamines. In terms of biological role, part of the ABC transporter complex PotFGHI involved in putrescine uptake. Responsible for energy coupling to the transport system. Imports putrescine for maintenance of the optimal concentration of polyamines necessary for cell growth in the presence of glucose. The protein is Putrescine transport ATP-binding protein PotG of Escherichia coli (strain K12).